Here is a 965-residue protein sequence, read N- to C-terminus: Phosphatidylethanolamine N-methyltransferase (965 aa).

The disordered stretch occupies residues 1 to 55 (MSSSAADPFAARLNSDVRQRHPTASATSKNVEGTSQQKQQQQQQQSEANAAASRV). Residues 1-91 (MSSSAADPFA…DPREPKNLSD (91 aa)) lie on the Lumenal side of the membrane. Positions 22–35 (PTASATSKNVEGTS) are enriched in polar residues. Low complexity predominate over residues 36–45 (QQKQQQQQQQ). The helical transmembrane segment at 92 to 112 (VAVLAIIALHFLAAYYLPWGV) threads the bilayer. Over 113–115 (KRP) the chain is Cytoplasmic. The helical transmembrane segment at 116–136 (LFAAIFMFWRLAYNVGIGYLL) threads the bilayer. The Lumenal portion of the chain corresponds to 137 to 201 (TIQSKYKLLV…EYNTWLTFRR (65 aa)). Residues 202–222 (VVDLILMCDFISYCLFAIVCA) traverse the membrane as a helical segment. The Cytoplasmic portion of the chain corresponds to 223–229 (HKPDGEG). Residues 230–250 (LFMCFARWAAGITLVGFNLWV) form a helical membrane-spanning segment. Over 251 to 279 (KLDAHRVVKDYAWYWGDFFYLIEQELTFD) the chain is Lumenal. The chain crosses the membrane as a helical span at residues 280-300 (GVFELAPHPMYSIGYAGYYGI). Residues 301-306 (SMMAAS) lie on the Cytoplasmic side of the membrane. Residues 307–327 (YDVLFISIIAHAAQFAFLVIV) traverse the membrane as a helical segment. Topologically, residues 328-389 (ENPHIEKTYN…IGLKNLDFFR (62 aa)) are lumenal. A helical transmembrane segment spans residues 390-410 (ITDVAIVLLCAYLAVVTMVTP). The Cytoplasmic segment spans residues 411–417 (NTRFYQA). The chain crosses the membrane as a helical span at residues 418–438 (LFVLHALAWRLWYSAGLGVIL). The Lumenal portion of the chain corresponds to 439–467 (TMQSEEKMFTRHFLKYGESVGEAWRQWKG). Residues 468–488 (IYHLSNCLCHASFIAASYKMY) form a helical membrane-spanning segment. Over 489–496 (EFPADWTY) the chain is Cytoplasmic. Residues 497–517 (GWALLKHVVGLSLIALQVWTA) form a helical membrane-spanning segment. Over 518 to 573 (TSIYESLGEFGWFYGDFFFDSKRQLTYTSIYRFLNNPERVFGTAGLWGAALITWSR) the chain is Lumenal. A helical transmembrane segment spans residues 574 to 594 (AIFLMALAGHFLTLAFLAYVE). Residues 595-965 (KPHMQKVYGR…TTPVDSKFSE (371 aa)) lie on the Cytoplasmic side of the membrane.

The protein belongs to the class VI-like SAM-binding methyltransferase superfamily. CHO2 family.

The protein localises to the endoplasmic reticulum membrane. The enzyme catalyses a 1,2-diacyl-sn-glycero-3-phosphoethanolamine + S-adenosyl-L-methionine = a 1,2-diacyl-sn-glycero-3-phospho-N-methylethanolamine + S-adenosyl-L-homocysteine + H(+). Its pathway is phospholipid metabolism; phosphatidylcholine biosynthesis. Functionally, catalyzes the first step of the methylation pathway of phosphatidylcholine biosynthesis, the SAM-dependent methylation of phosphatidylethanolamine (PE) to phosphatidylmonomethylethanolamine (PMME). The polypeptide is Phosphatidylethanolamine N-methyltransferase (Neurospora crassa (strain ATCC 24698 / 74-OR23-1A / CBS 708.71 / DSM 1257 / FGSC 987)).